The chain runs to 4138 residues: Fumosorinone synthetase (4138 aa).

The 441-residue stretch at 15–455 (PEPIAIVGSA…GTNAHAIIER (441 aa)) folds into the Ketosynthase family 3 (KS3) domain. Catalysis depends on for beta-ketoacyl synthase activity residues Cys-189, His-328, and His-375. The tract at residues 590 to 921 (VFTGQGAQWP…APDAVSFSTA (332 aa)) is malonyl-CoA:ACP transacylase (MAT) domain. Residues 990–1133 (HELLGRRAVD…GLIDVHLGPR (144 aa)) are N-terminal hotdog fold. Positions 990–1306 (HELLGRRAVD…GFEVRSVGER (317 aa)) are dehydratase (DH) domain. The PKS/mFAS DH domain maps to 990-1309 (HELLGRRAVD…VRSVGERDAA (320 aa)). The active-site Proton acceptor; for dehydratase activity is the His-1022. The segment at 1157-1309 (LQEIDCEKLY…VRSVGERDAA (153 aa)) is C-terminal hotdog fold. The Proton donor; for dehydratase activity role is filled by Asp-1216. The segment at 1456 to 1650 (RFYAEDKGMQ…FSGADHVAHD (195 aa)) is methyltransferase (MT) domain. The interval 2205–2379 (TYLMVGAAGG…AASIIHVGFV (175 aa)) is ketoreductase (KR) domain. In terms of domain architecture, Carrier 1 spans 2507–2587 (EAAAAVRRAF…QLSTLAAKLA (81 aa)). At Ser-2547 the chain carries O-(pantetheine 4'-phosphoryl)serine. The segment at 2587-2683 (ARQQSPRKEG…TEPKTEDKVS (97 aa)) is disordered. The span at 2610-2621 (TQDKLVDDKEQK) shows a compositional bias: basic and acidic residues. The span at 2622 to 2643 (VQVTSSLAKADSLTQEMQASAH) shows a compositional bias: polar residues. Residues 2647–2659 (DSATNPTPSSTAS) are compositionally biased toward low complexity. A compositionally biased stretch (polar residues) spans 2664–2675 (SNSQSTRSTSTE). Residues 2701–3128 (REAPMSAAQA…ASQRVRECAV (428 aa)) form a condensation (C) domain region. Residues 3162-3564 (CQKNSARTAI…DGTLLCFGRI (403 aa)) are adenylation (A) (KR) domain. The region spanning 3680 to 3759 (EKMTIQEGEL…GMTRCVLAQR (80 aa)) is the Carrier 2 domain. O-(pantetheine 4'-phosphoryl)serine is present on Ser-3719. Positions 3813 to 4045 (LTGATGFLGG…LDFGTVDAVV (233 aa)) are reductase (RED) domain.

This sequence in the C-terminal section; belongs to the NRP synthetase family.

Functionally, hybrid PKS-NRPS synthetase; part of the gene cluster that mediates the biosynthesis of fumosorinone, a 2-pyridone alkaloid that acts as an inhibitor of protein tyrosine phosphatase 1B which is implicated asa negative regulator of insulin receptor signaling and a potential drug target for the treatment of type II diabetes and other associated metabolic syndromes. The polyketide-amino acid backbone of fumosorinone is first assembled by the PKS-NRPS hybrid fumoS. The PKS modules condense one acetyl-CoA starter unit with 7 malonyl-CoA units, programmed C-methylations occurring after the first 3 and the sixth extensions, and cycles of full reduction occurring after the first 2 extensions. Because fumoS lacks a designated enoyl reductase (ER) domain, the required activity is provided the enoyl reductase fumoC. Upon formation of the polyketide backbone on the thiotemplate, the polyketide is transferred to the NRPS module and linked to tyrosine to produce the acyltetramic acid intermediate called prefumosorinone A. The cytochrome P450 monooxygenase fumoA then probably catalyzes an unprecedented oxidative ring expansion of prefumosorinone A to form prefumosorinone B which contains the 2-pyridone core of fumosorinone. The cytochrome P450 monooxygenase fumoB might hydroxylate the nitrogen of prefumosorinone B, but not the acyltetramic acid prefumosorinone A, to form fumosorinone. This Cordyceps fumosorosea (strain ARSEF 2679) (Isaria fumosorosea) protein is Fumosorinone synthetase.